The chain runs to 41 residues: Large ribosomal subunit protein bL36 (41 aa).

This sequence belongs to the bacterial ribosomal protein bL36 family.

This chain is Large ribosomal subunit protein bL36, found in Bartonella quintana (strain Toulouse) (Rochalimaea quintana).